Consider the following 142-residue polypeptide: Pro-opiomelanocortin (142 aa).

A propeptide spanning residues 1-8 (SEPGRREG) is cleaved from the precursor. Valine 23 carries the valine amide modification. Serine 41 carries the post-translational modification Phosphoserine.

It belongs to the POMC family. Post-translationally, specific enzymatic cleavages at paired basic residues yield the different active peptides. As to expression, ACTH and MSH are produced by the pituitary gland.

It localises to the secreted. Its function is as follows. Stimulates the adrenal glands to release cortisol. In terms of biological role, anorexigenic peptide. Increases the pigmentation of skin by increasing melanin production in melanocytes. Functionally, increases the pigmentation of skin by increasing melanin production in melanocytes. Endogenous orexigenic opiate. Its function is as follows. Endogenous opiate. The polypeptide is Pro-opiomelanocortin (POMC) (Neovison vison (American mink)).